A 343-amino-acid chain; its full sequence is tRNA N6-adenosine threonylcarbamoyltransferase (343 aa).

Fe cation contacts are provided by H120 and H124. Substrate-binding positions include 142-146 (VVSGG), D175, G188, D192, and N281. Residue D310 participates in Fe cation binding.

This sequence belongs to the KAE1 / TsaD family. Fe(2+) is required as a cofactor.

It is found in the cytoplasm. The catalysed reaction is L-threonylcarbamoyladenylate + adenosine(37) in tRNA = N(6)-L-threonylcarbamoyladenosine(37) in tRNA + AMP + H(+). Required for the formation of a threonylcarbamoyl group on adenosine at position 37 (t(6)A37) in tRNAs that read codons beginning with adenine. Is involved in the transfer of the threonylcarbamoyl moiety of threonylcarbamoyl-AMP (TC-AMP) to the N6 group of A37, together with TsaE and TsaB. TsaD likely plays a direct catalytic role in this reaction. The polypeptide is tRNA N6-adenosine threonylcarbamoyltransferase (Bacillus cereus (strain ATCC 14579 / DSM 31 / CCUG 7414 / JCM 2152 / NBRC 15305 / NCIMB 9373 / NCTC 2599 / NRRL B-3711)).